We begin with the raw amino-acid sequence, 493 residues long: Xaa-Pro dipeptidase (493 aa).

An N-acetylalanine modification is found at alanine 2. Serine 167 bears the Phosphoserine mark. Histidine 255 is a binding site for a dipeptide. Residues aspartate 276, aspartate 287, and histidine 370 each contribute to the Mn(2+) site. Aspartate 287 contributes to the a dipeptide binding site. The a dipeptide site is built by histidine 377 and arginine 398. Mn(2+)-binding residues include glutamate 412 and glutamate 452.

It belongs to the peptidase M24B family. Eukaryotic-type prolidase subfamily. Homodimer. Mn(2+) serves as cofactor.

The enzyme catalyses Xaa-L-Pro dipeptide + H2O = an L-alpha-amino acid + L-proline. Its function is as follows. Dipeptidase that catalyzes the hydrolysis of dipeptides with a prolyl (Xaa-Pro) or hydroxyprolyl residue in the C-terminal position. The preferred dipeptide substrate is Gly-Pro, but other Xaa-Pro dipeptides, such as Ala-Pro, Met-Pro, Phe-Pro, Val-Pro and Leu-Pro, can be cleaved. Plays an important role in collagen metabolism because the high level of iminoacids in collagen. The polypeptide is Xaa-Pro dipeptidase (Pepd) (Mus musculus (Mouse)).